A 103-amino-acid chain; its full sequence is Small ribosomal subunit protein uS10 (103 aa).

The protein belongs to the universal ribosomal protein uS10 family. Part of the 30S ribosomal subunit.

Its function is as follows. Involved in the binding of tRNA to the ribosomes. This is Small ribosomal subunit protein uS10 from Acinetobacter baylyi (strain ATCC 33305 / BD413 / ADP1).